A 295-amino-acid chain; its full sequence is Glutamyl-Q tRNA(Asp) synthetase (295 aa).

L-glutamate contacts are provided by residues 5–9 and Glu41; that span reads RFAPS. The short motif at 8–18 is the 'HIGH' region element; sequence PSPTGLLHIGS. Residues Cys97, Cys99, Tyr117, and Cys121 each contribute to the Zn(2+) site. L-glutamate is bound by residues Tyr178 and Arg196. The short motif at 234 to 238 is the 'KMSKS' region element; it reads KWSKQ. ATP is bound at residue Lys237.

The protein belongs to the class-I aminoacyl-tRNA synthetase family. GluQ subfamily. Zn(2+) is required as a cofactor.

In terms of biological role, catalyzes the tRNA-independent activation of glutamate in presence of ATP and the subsequent transfer of glutamate onto a tRNA(Asp). Glutamate is transferred on the 2-amino-5-(4,5-dihydroxy-2-cyclopenten-1-yl) moiety of the queuosine in the wobble position of the QUC anticodon. The chain is Glutamyl-Q tRNA(Asp) synthetase from Neisseria meningitidis serogroup C / serotype 2a (strain ATCC 700532 / DSM 15464 / FAM18).